The following is a 1446-amino-acid chain: ABC-type transporter oblD (1446 aa).

N-linked (GlcNAc...) asparagine glycosylation is found at Asn9, Asn28, Asn222, Asn281, and Asn305. The ABC transporter 1 domain occupies 104 to 357 (LEVLSLVSKA…FLDMGFVCPD (254 aa)). A run of 6 helical transmembrane segments spans residues 468–488 (VTISSVFGNTIISLVIASIFY), 502–522 (ALLFFAVLMNALGCGLEMLTL), 548–568 (MIMDLPYKIINAITSNIVLYF), 577–597 (GAFFFFVFTSFVLTLTMSMFF), 610–630 (ALPFSAVLLLGLSMYTGFTIP), and 719–739 (IGVIFAYMFLLAAVYLVATDF). One can recognise an ABC transporter 2 domain in the interval 796-1038 (FQWKDVCFDI…ILIDYFVRNG (243 aa)). Residue 832–839 (GVSGAGKT) participates in ATP binding. 5 helical membrane passes run 1147–1167 (ALCVLSALFVGFSLFHTPNTI), 1177–1197 (IFMLLTVFGQLIQQIMPHFVA), 1217–1237 (FIISNIVVELPWNSLMSVLMF), 1265–1285 (LMVWTFLLFSSTFAHFMIAAF), and 1301–1321 (LCLIFCGVLATPGQLPGFWIF). Residues Asn1344 and Asn1359 are each glycosylated (N-linked (GlcNAc...) asparagine). A helical transmembrane segment spans residues 1412 to 1432 (FGLMWVFIVFNIFAACLLYWW).

It belongs to the ABC transporter superfamily. ABCG family. PDR (TC 3.A.1.205) subfamily.

Its subcellular location is the cell membrane. ABC-type transporter; part of the gene cluster that mediates the biosynthesis of the sesterterpenes ophiobolins, fungal phytotoxins with potential anti-cancer activities. Acts as a specific transporter involved in ophiobolins secretion. This chain is ABC-type transporter oblD, found in Aspergillus clavatus (strain ATCC 1007 / CBS 513.65 / DSM 816 / NCTC 3887 / NRRL 1 / QM 1276 / 107).